The primary structure comprises 206 residues: Small ribosomal subunit protein uS4 (206 aa).

In terms of domain architecture, S4 RNA-binding spans 96-161 (RRLDNVVYRM…QGRIQAALAL (66 aa)).

Belongs to the universal ribosomal protein uS4 family. In terms of assembly, part of the 30S ribosomal subunit. Contacts protein S5. The interaction surface between S4 and S5 is involved in control of translational fidelity.

One of the primary rRNA binding proteins, it binds directly to 16S rRNA where it nucleates assembly of the body of the 30S subunit. Functionally, with S5 and S12 plays an important role in translational accuracy. The chain is Small ribosomal subunit protein uS4 from Legionella pneumophila (strain Corby).